Reading from the N-terminus, the 130-residue chain is Keratin-associated protein 12-1 (130 aa).

A run of 14 repeats spans residues 10 to 14 (CQPSC), 15 to 29 (CVSS…VSSP), 34 to 38 (CFVSS), 40 to 44 (CQPSC), 45 to 49 (CVSSS), 60 to 64 (CIPVR), 85 to 89 (CQSSV), 90 to 94 (CVPVS), 95 to 99 (CRPVC), 104 to 108 (CQSSG), 109 to 113 (CCQPS), 114 to 118 (CPTLV), 119 to 123 (CKPVT), and 124 to 128 (CSNPS). Residues 10–128 (CQPSCCVSSS…CKPVTCSNPS (119 aa)) form a 14 X 5 AA approximate repeats region.

It belongs to the KRTAP type 12 family. As to quaternary structure, interacts with hair keratins. In terms of tissue distribution, expressed only in the head and back skin of a 3 day old mouse. Not expressed in adult skin.

In terms of biological role, in the hair cortex, hair keratin intermediate filaments are embedded in an interfilamentous matrix, consisting of hair keratin-associated proteins (KRTAP), which are essential for the formation of a rigid and resistant hair shaft through their extensive disulfide bond cross-linking with abundant cysteine residues of hair keratins. The matrix proteins include the high-sulfur and high-glycine-tyrosine keratins. The polypeptide is Keratin-associated protein 12-1 (Mus musculus (Mouse)).